The chain runs to 208 residues: Urease accessory protein UreG 1 (208 aa).

Position 14–21 (14–21 (GPVGSGKT)) interacts with GTP.

It belongs to the SIMIBI class G3E GTPase family. UreG subfamily. Homodimer. UreD, UreF and UreG form a complex that acts as a GTP-hydrolysis-dependent molecular chaperone, activating the urease apoprotein by helping to assemble the nickel containing metallocenter of UreC. The UreE protein probably delivers the nickel.

The protein localises to the cytoplasm. Its function is as follows. Facilitates the functional incorporation of the urease nickel metallocenter. This process requires GTP hydrolysis, probably effectuated by UreG. The sequence is that of Urease accessory protein UreG 1 from Brucella ovis (strain ATCC 25840 / 63/290 / NCTC 10512).